The following is a 152-amino-acid chain: Small ribosomal subunit protein uS13 (152 aa).

Belongs to the universal ribosomal protein uS13 family.

The protein resides in the cytoplasm. In terms of biological role, located at the top of the head of the 40S subunit, it contacts several helices of the 18S rRNA. The polypeptide is Small ribosomal subunit protein uS13 (RPS18) (Branchiostoma belcheri (Amphioxus)).